The sequence spans 444 residues: Phosphoglucosamine mutase (444 aa).

The active-site Phosphoserine intermediate is the S104. Residues S104, D243, D245, and D247 each coordinate Mg(2+). Residue S104 is modified to Phosphoserine.

The protein belongs to the phosphohexose mutase family. Mg(2+) serves as cofactor. Activated by phosphorylation.

It catalyses the reaction alpha-D-glucosamine 1-phosphate = D-glucosamine 6-phosphate. In terms of biological role, catalyzes the conversion of glucosamine-6-phosphate to glucosamine-1-phosphate. This is Phosphoglucosamine mutase from Neisseria gonorrhoeae (strain ATCC 700825 / FA 1090).